The primary structure comprises 82 residues: Small ribosomal subunit protein bS18 (82 aa).

Belongs to the bacterial ribosomal protein bS18 family. In terms of assembly, part of the 30S ribosomal subunit. Forms a tight heterodimer with protein bS6.

Functionally, binds as a heterodimer with protein bS6 to the central domain of the 16S rRNA, where it helps stabilize the platform of the 30S subunit. This chain is Small ribosomal subunit protein bS18, found in Rhizobium rhizogenes (strain K84 / ATCC BAA-868) (Agrobacterium radiobacter).